Here is a 199-residue protein sequence, read N- to C-terminus: Holliday junction branch migration complex subunit RuvA (199 aa).

The domain I stretch occupies residues 1-63; it reads MIGKLNGKID…EEHIHLYGFL (63 aa). The tract at residues 64–141 is domain II; that stretch reads TLEEKNFFNL…TKIFSSSAII (78 aa). Residues 141-145 form a flexible linker region; that stretch reads IKDSN. The interval 146–199 is domain III; that stretch reads ISSIAINEVMKALVNLGFTRFEAQNTVQGIITQNPKISIDELIKTALKNRNSSF.

The protein belongs to the RuvA family. In terms of assembly, homotetramer. Forms an RuvA(8)-RuvB(12)-Holliday junction (HJ) complex. HJ DNA is sandwiched between 2 RuvA tetramers; dsDNA enters through RuvA and exits via RuvB. An RuvB hexamer assembles on each DNA strand where it exits the tetramer. Each RuvB hexamer is contacted by two RuvA subunits (via domain III) on 2 adjacent RuvB subunits; this complex drives branch migration. In the full resolvosome a probable DNA-RuvA(4)-RuvB(12)-RuvC(2) complex forms which resolves the HJ.

The protein localises to the cytoplasm. In terms of biological role, the RuvA-RuvB-RuvC complex processes Holliday junction (HJ) DNA during genetic recombination and DNA repair, while the RuvA-RuvB complex plays an important role in the rescue of blocked DNA replication forks via replication fork reversal (RFR). RuvA specifically binds to HJ cruciform DNA, conferring on it an open structure. The RuvB hexamer acts as an ATP-dependent pump, pulling dsDNA into and through the RuvAB complex. HJ branch migration allows RuvC to scan DNA until it finds its consensus sequence, where it cleaves and resolves the cruciform DNA. This chain is Holliday junction branch migration complex subunit RuvA, found in Rickettsia prowazekii (strain Madrid E).